Reading from the N-terminus, the 252-residue chain is Imidazole glycerol phosphate synthase subunit HisF (252 aa).

Residues Asp-11 and Asp-130 contribute to the active site.

Belongs to the HisA/HisF family. In terms of assembly, heterodimer of HisH and HisF.

It is found in the cytoplasm. It carries out the reaction 5-[(5-phospho-1-deoxy-D-ribulos-1-ylimino)methylamino]-1-(5-phospho-beta-D-ribosyl)imidazole-4-carboxamide + L-glutamine = D-erythro-1-(imidazol-4-yl)glycerol 3-phosphate + 5-amino-1-(5-phospho-beta-D-ribosyl)imidazole-4-carboxamide + L-glutamate + H(+). Its pathway is amino-acid biosynthesis; L-histidine biosynthesis; L-histidine from 5-phospho-alpha-D-ribose 1-diphosphate: step 5/9. IGPS catalyzes the conversion of PRFAR and glutamine to IGP, AICAR and glutamate. The HisF subunit catalyzes the cyclization activity that produces IGP and AICAR from PRFAR using the ammonia provided by the HisH subunit. This chain is Imidazole glycerol phosphate synthase subunit HisF, found in Moorella thermoacetica (strain ATCC 39073 / JCM 9320).